The primary structure comprises 464 residues: Zinc transporter 6 (464 aa).

Residues 1-33 (MGTIYLFRKTQRSLLGKLTQEFRLVTADRRSWK) are Cytoplasmic-facing. The chain crosses the membrane as a helical span at residues 34 to 54 (ILLFGAINVVCTGFLLTWCSS). The Extracellular segment spans residues 55-64 (TNSMALTAYT). A helical transmembrane segment spans residues 65 to 85 (YLTIFDLFSLITCLISYWVMM). The Cytoplasmic segment spans residues 86 to 98 (KKPSPTYSFGFER). The helical transmembrane segment at 99–119 (FEVLSVFASTVLAQLGALFIL) threads the bilayer. At 120 to 134 (KESAERFVEQPEIHT) the chain is on the extracellular side. A helical membrane pass occupies residues 135–155 (GRLLVGTFVALCFNLFSMLSI). Over 156 to 200 (RNKPFAYVSEAASTSWLQEHVADLSRSLCGIIPGLSSIFLPRMNP) the chain is Cytoplasmic. The helical transmembrane segment at 201–221 (FVLIDIAGALALCITYMLIEI) threads the bilayer. The Extracellular portion of the chain corresponds to 222-228 (NNYFAVD). A helical transmembrane segment spans residues 229 to 249 (TASAIAIAVMTFGTMYPMSVY). At 250-464 (SGKVLLQTTP…TPGQFTQFKQ (215 aa)) the chain is on the cytoplasmic side.

This sequence belongs to the cation diffusion facilitator (CDF) transporter (TC 2.A.4) family. SLC30A subfamily. As to quaternary structure, heterodimer with SLC30A5; form a functional zinc ion transmembrane transporter.

The protein resides in the golgi apparatus. Its subcellular location is the trans-Golgi network membrane. Functionally, has probably no intrinsic transporter activity but together with SLC30A5 forms a functional zinc ion:proton antiporter heterodimer, mediating zinc entry into the lumen of organelles along the secretory pathway. As part of that zinc ion:proton antiporter, contributes to zinc ion homeostasis within the early secretory pathway and regulates the activation and folding of enzymes like alkaline phosphatases and enzymes involved in phosphatidylinositol glycan anchor biosynthesis. In Xenopus tropicalis (Western clawed frog), this protein is Zinc transporter 6 (slc30a6).